A 203-amino-acid chain; its full sequence is MTTAPSEDLLTLARWMAGDFSNQKQALAQPQTFAHIRVFFRPLPFAFFGTVGFYSEQTYDYDLWSPYRQGLHRLLDREGGIYIENYGLQDAGLYAGAGHDPEILATIPTDCLQPRRGCAMVFRREGDCFRGSVEPGNHCLIPRDGYWTYLVSEVELTESTWVSLDRGMDRETHRQIWGSQAGPLHFEKREGFDPPLPPLGKGG.

Belongs to the CpcT/CpeT biliprotein lyase family.

Functionally, covalently attaches a chromophore to Cys residue(s) of phycobiliproteins. In Gloeobacter violaceus (strain ATCC 29082 / PCC 7421), this protein is Chromophore lyase CpcT/CpeT 3.